A 49-amino-acid chain; its full sequence is Large ribosomal subunit protein bL32 (49 aa).

This sequence belongs to the bacterial ribosomal protein bL32 family.

The sequence is that of Large ribosomal subunit protein bL32 from Helicobacter hepaticus (strain ATCC 51449 / 3B1).